A 346-amino-acid chain; its full sequence is Uroporphyrinogen decarboxylase (346 aa).

Substrate contacts are provided by residues 26–30 (RQAGR), Asp76, Tyr153, Ser208, and His323.

It belongs to the uroporphyrinogen decarboxylase family. Homodimer.

The protein resides in the cytoplasm. The enzyme catalyses uroporphyrinogen III + 4 H(+) = coproporphyrinogen III + 4 CO2. Its pathway is porphyrin-containing compound metabolism; protoporphyrin-IX biosynthesis; coproporphyrinogen-III from 5-aminolevulinate: step 4/4. Functionally, catalyzes the decarboxylation of four acetate groups of uroporphyrinogen-III to yield coproporphyrinogen-III. This is Uroporphyrinogen decarboxylase from Prochlorococcus marinus (strain AS9601).